A 237-amino-acid chain; its full sequence is Phosphoribosylaminoimidazole-succinocarboxamide synthase (237 aa).

It belongs to the SAICAR synthetase family.

It catalyses the reaction 5-amino-1-(5-phospho-D-ribosyl)imidazole-4-carboxylate + L-aspartate + ATP = (2S)-2-[5-amino-1-(5-phospho-beta-D-ribosyl)imidazole-4-carboxamido]succinate + ADP + phosphate + 2 H(+). It functions in the pathway purine metabolism; IMP biosynthesis via de novo pathway; 5-amino-1-(5-phospho-D-ribosyl)imidazole-4-carboxamide from 5-amino-1-(5-phospho-D-ribosyl)imidazole-4-carboxylate: step 1/2. In Oceanobacillus iheyensis (strain DSM 14371 / CIP 107618 / JCM 11309 / KCTC 3954 / HTE831), this protein is Phosphoribosylaminoimidazole-succinocarboxamide synthase.